The primary structure comprises 309 residues: Ribosomal RNA small subunit methyltransferase H (309 aa).

S-adenosyl-L-methionine is bound by residues 32–34 (AGH), D52, F79, D100, and Q107.

It belongs to the methyltransferase superfamily. RsmH family.

Its subcellular location is the cytoplasm. The enzyme catalyses cytidine(1402) in 16S rRNA + S-adenosyl-L-methionine = N(4)-methylcytidine(1402) in 16S rRNA + S-adenosyl-L-homocysteine + H(+). In terms of biological role, specifically methylates the N4 position of cytidine in position 1402 (C1402) of 16S rRNA. The chain is Ribosomal RNA small subunit methyltransferase H from Mycoplasma capricolum subsp. capricolum (strain California kid / ATCC 27343 / NCTC 10154).